The following is a 348-amino-acid chain: Histidinol-phosphate aminotransferase (348 aa).

Lys210 carries the N6-(pyridoxal phosphate)lysine modification.

This sequence belongs to the class-II pyridoxal-phosphate-dependent aminotransferase family. Histidinol-phosphate aminotransferase subfamily. As to quaternary structure, homodimer. It depends on pyridoxal 5'-phosphate as a cofactor.

It carries out the reaction L-histidinol phosphate + 2-oxoglutarate = 3-(imidazol-4-yl)-2-oxopropyl phosphate + L-glutamate. The protein operates within amino-acid biosynthesis; L-histidine biosynthesis; L-histidine from 5-phospho-alpha-D-ribose 1-diphosphate: step 7/9. The polypeptide is Histidinol-phosphate aminotransferase (Cytophaga hutchinsonii (strain ATCC 33406 / DSM 1761 / CIP 103989 / NBRC 15051 / NCIMB 9469 / D465)).